The sequence spans 130 residues: L-ectoine synthase (130 aa).

This sequence belongs to the ectoine synthase family.

The catalysed reaction is (2S)-4-acetamido-2-aminobutanoate = L-ectoine + H2O. Its pathway is amine and polyamine biosynthesis; ectoine biosynthesis; L-ectoine from L-aspartate 4-semialdehyde: step 3/3. In terms of biological role, catalyzes the circularization of gamma-N-acetyl-alpha,gamma-diaminobutyric acid (ADABA) to ectoine (1,4,5,6-tetrahydro-2-methyl-4-pyrimidine carboxylic acid), which is an excellent osmoprotectant. In Desulfatibacillum aliphaticivorans, this protein is L-ectoine synthase.